Here is an 842-residue protein sequence, read N- to C-terminus: Elongation factor 2 (842 aa).

The tr-type G domain occupies Thr17 to Val346. GTP contacts are provided by residues Ala26–Ser33, Asn158–Asp161, and Ser213–Leu215. His699 is subject to Diphthamide.

It belongs to the TRAFAC class translation factor GTPase superfamily. Classic translation factor GTPase family. EF-G/EF-2 subfamily.

It is found in the cytoplasm. The enzyme catalyses GTP + H2O = GDP + phosphate + H(+). Catalyzes the GTP-dependent ribosomal translocation step during translation elongation. During this step, the ribosome changes from the pre-translocational (PRE) to the post-translocational (POST) state as the newly formed A-site-bound peptidyl-tRNA and P-site-bound deacylated tRNA move to the P and E sites, respectively. Catalyzes the coordinated movement of the two tRNA molecules, the mRNA and conformational changes in the ribosome. The sequence is that of Elongation factor 2 (EFT1) from Candida glabrata (strain ATCC 2001 / BCRC 20586 / JCM 3761 / NBRC 0622 / NRRL Y-65 / CBS 138) (Yeast).